Consider the following 541-residue polypeptide: Carboxypeptidase Y homolog A (541 aa).

An N-terminal signal peptide occupies residues 1 to 17; sequence MKLLMTGLLASAAVAAA. Positions 18 to 122 are excised as a propeptide; that stretch reads QEQQVLQAEG…KLQSYDLRVK (105 aa). 5 disulfides stabilise this stretch: Cys177–Cys417, Cys311–Cys325, Cys335–Cys358, Cys342–Cys351, and Cys380–Cys387. The N-linked (GlcNAc...) asparagine glycan is linked to Asn208. The active site involves Ser264. The active site involves Asp456. An N-linked (GlcNAc...) asparagine glycan is attached at Asn507. His518 is an active-site residue.

Belongs to the peptidase S10 family.

It is found in the vacuole. The enzyme catalyses Release of a C-terminal amino acid with broad specificity.. In terms of biological role, vacuolar carboxypeptidase involved in degradation of small peptides. Digests preferentially peptides containing an aliphatic or hydrophobic residue in P1' position, as well as methionine, leucine or phenylalanine in P1 position of ester substrate. The sequence is that of Carboxypeptidase Y homolog A (CPYA) from Arthroderma otae (strain ATCC MYA-4605 / CBS 113480) (Microsporum canis).